The sequence spans 272 residues: Proteasome subunit beta (272 aa).

Positions 1–47 (MSTGGDRLPEAFLRPGSSSFVEFLREVAPQSHPEHARPAGAGDVVHA) are cleaved as a propeptide — removed in mature form; by autocatalysis. The active-site Nucleophile is Thr48.

The protein belongs to the peptidase T1B family. As to quaternary structure, the 20S proteasome core is composed of 14 alpha and 14 beta subunits that assemble into four stacked heptameric rings, resulting in a barrel-shaped structure. The two inner rings, each composed of seven catalytic beta subunits, are sandwiched by two outer rings, each composed of seven alpha subunits. The catalytic chamber with the active sites is on the inside of the barrel. Has a gated structure, the ends of the cylinder being occluded by the N-termini of the alpha-subunits. Is capped by the proteasome-associated ATPase, ARC.

The protein resides in the cytoplasm. The enzyme catalyses Cleavage of peptide bonds with very broad specificity.. It participates in protein degradation; proteasomal Pup-dependent pathway. Its activity is regulated as follows. The formation of the proteasomal ATPase ARC-20S proteasome complex, likely via the docking of the C-termini of ARC into the intersubunit pockets in the alpha-rings, may trigger opening of the gate for substrate entry. Interconversion between the open-gate and close-gate conformations leads to a dynamic regulation of the 20S proteasome proteolysis activity. In terms of biological role, component of the proteasome core, a large protease complex with broad specificity involved in protein degradation. In Beutenbergia cavernae (strain ATCC BAA-8 / DSM 12333 / CCUG 43141 / JCM 11478 / NBRC 16432 / NCIMB 13614 / HKI 0122), this protein is Proteasome subunit beta.